The primary structure comprises 209 residues: Chaperone protein TorD (209 aa).

Belongs to the TorD/DmsD family. TorD subfamily.

Its subcellular location is the cytoplasm. Its function is as follows. Involved in the biogenesis of TorA. Acts on TorA before the insertion of the molybdenum cofactor and, as a result, probably favors a conformation of the apoenzyme that is competent for acquiring the cofactor. The chain is Chaperone protein TorD from Salmonella bongori (strain ATCC 43975 / DSM 13772 / NCTC 12419).